The chain runs to 216 residues: Adenylate kinase (216 aa).

10 to 15 (GAGKGT) contributes to the ATP binding site. The interval 30–59 (STGDMLRAAVSAQTEVGKRAKAVMDAGKLV) is NMP. Residues T31, R36, 57-59 (KLV), 85-88 (GFPR), and Q92 contribute to the AMP site. The tract at residues 126–163 (GRYTCANCGTGYHDENLKPKVEGVCDKCGSTHFKRRPD) is LID. R127 lines the ATP pocket. Zn(2+)-binding residues include C130, C133, C150, and C153. The AMP site is built by R160 and R172. A200 serves as a coordination point for ATP.

It belongs to the adenylate kinase family. In terms of assembly, monomer.

Its subcellular location is the cytoplasm. The enzyme catalyses AMP + ATP = 2 ADP. It participates in purine metabolism; AMP biosynthesis via salvage pathway; AMP from ADP: step 1/1. Catalyzes the reversible transfer of the terminal phosphate group between ATP and AMP. Plays an important role in cellular energy homeostasis and in adenine nucleotide metabolism. The sequence is that of Adenylate kinase from Allorhizobium ampelinum (strain ATCC BAA-846 / DSM 112012 / S4) (Agrobacterium vitis (strain S4)).